Consider the following 822-residue polypeptide: Phenylalanine--tRNA ligase beta subunit (822 aa).

One can recognise a tRNA-binding domain in the interval 39-150 (ADRLVGFRTA…ETAPIGESYA (112 aa)). The B5 domain maps to 399–502 (DWKRTARLRF…RLYGLDNVPA (104 aa)). Asp-486, Glu-489, and Glu-490 together coordinate Mg(2+). The region spanning 728-821 (SPLQPVRRDF…VLKATGAVLR (94 aa)) is the FDX-ACB domain.

This sequence belongs to the phenylalanyl-tRNA synthetase beta subunit family. Type 1 subfamily. Tetramer of two alpha and two beta subunits. Requires Mg(2+) as cofactor.

It localises to the cytoplasm. The catalysed reaction is tRNA(Phe) + L-phenylalanine + ATP = L-phenylalanyl-tRNA(Phe) + AMP + diphosphate + H(+). The polypeptide is Phenylalanine--tRNA ligase beta subunit (Gluconobacter oxydans (strain 621H) (Gluconobacter suboxydans)).